Reading from the N-terminus, the 186-residue chain is Pyridoxal 5'-phosphate synthase subunit PdxT (186 aa).

46-48 is a binding site for L-glutamine; the sequence is GES. The active-site Nucleophile is the cysteine 75. L-glutamine-binding positions include arginine 101 and 129–130; that span reads IR. Catalysis depends on charge relay system residues histidine 165 and glutamate 167.

The protein belongs to the glutaminase PdxT/SNO family. As to quaternary structure, in the presence of PdxS, forms a dodecamer of heterodimers. Only shows activity in the heterodimer.

It catalyses the reaction aldehydo-D-ribose 5-phosphate + D-glyceraldehyde 3-phosphate + L-glutamine = pyridoxal 5'-phosphate + L-glutamate + phosphate + 3 H2O + H(+). The enzyme catalyses L-glutamine + H2O = L-glutamate + NH4(+). Its pathway is cofactor biosynthesis; pyridoxal 5'-phosphate biosynthesis. In terms of biological role, catalyzes the hydrolysis of glutamine to glutamate and ammonia as part of the biosynthesis of pyridoxal 5'-phosphate. The resulting ammonia molecule is channeled to the active site of PdxS. The polypeptide is Pyridoxal 5'-phosphate synthase subunit PdxT (Staphylococcus aureus (strain Mu3 / ATCC 700698)).